A 193-amino-acid chain; its full sequence is UPF0301 protein SCO2948 (193 aa).

It belongs to the UPF0301 (AlgH) family.

The sequence is that of UPF0301 protein SCO2948 from Streptomyces coelicolor (strain ATCC BAA-471 / A3(2) / M145).